The following is an 810-amino-acid chain: Zinc finger transcription factor YRR1 (810 aa).

The disordered stretch occupies residues 1–47 (MKRRSDALLGSFQATNVTPPSDNSNSTAGGANGSNSGTPTSTSGKKR). Residues 12–22 (FQATNVTPPSD) are compositionally biased toward polar residues. The segment covering 23 to 43 (NSNSTAGGANGSNSGTPTSTS) has biased composition (low complexity). The zn(2)-C6 fungal-type DNA-binding region spans 54–82 (CGFCRRRKLRCDQQKPMCSTCISRNLTTC). The disordered stretch occupies residues 722–742 (ELDPQSDNPSSEAKIVSDRQR).

The protein localises to the cytoplasm. It is found in the nucleus. In terms of biological role, transcription factor involved in the regulation of multidrug resistance genes. Acts in concert with YRR1. The chain is Zinc finger transcription factor YRR1 (YRR1) from Saccharomyces cerevisiae (strain ATCC 204508 / S288c) (Baker's yeast).